We begin with the raw amino-acid sequence, 904 residues long: MNMIQNILRVILGSKFERDLKKLIPIVGQINSLEKEMKETSDSLLSSQTQKFRERIARGESLDSILPEAFATVREVSLRTMGMRHFDVQMMGGIALHRGNIAEMKTGEGKTLTSTLAVYLNSLAGKGVHVVTVNDYLAKRDANWMKPIYDFLGISVGVIQHDMDHEQRKIAYSADITYGTNNEFGFDYLRDNMVSHKDHKVQRSHFFAIVDEVDSILIDEARTPLIISGSSDETTDKYVRINKIIPKLVAIEDFEVDEKARNVLLSEKGVSHVEEILGIENLYAPENVDLVHHVHQALKAHKIFQKDVDYVVQNGEVIIVDEFTGRLMAGRRYSDGLHQALEAKESVTIAKESQTLASITFQNYFRMYDKLAGMTGTADTEAEEFRKIYDLDVIVIPPNVSVRRKDSPDRVYRTEKEKFDAILAEIRELQSKKQPVLVGTISIEKSEILSKMLSSAGIQHNVLNAKFHEREAEIVANAGKPGAVTIATNMAGRGTDIVLGGAQLYKENLETWKDDDDLVRRFKESILKQELDNAELLIREMDSSVKQKRASEILESVKIWKKNHEDVLVAGGLHILGTERHEARRIDNQLRGRSGRQGDPGSSRFYLSLQDDLMRIFGSDRISGLMKWANMPEGQEIESKMVSNAIARAQKRVEGHNFDIRKHLLEYDDVMNRQRIVIYKMRNEVLENEDISSLILSFIEEAVENQIVAHCEGNNPSSWNLDSLKEWLEGLELNLEINEEDFKKTKNPQLALFEKVNAAAKQKYEDRAESIGKDIWKLLERNIFLDILDHRWKEHLYSMDHLREGIWTVGYSERNPLVEYKLQGFRMFDVAIENLKNEVVNFLFRVEVSENSKLPEERREYKKVGQEVTGGFQELSSGTPSPTVTVTTSSGGGTERKTSRRRKR.

ATP is bound by residues glutamine 89, 107-111 (GEGKT), and aspartate 496. The tract at residues 870–904 (GGFQELSSGTPSPTVTVTTSSGGGTERKTSRRRKR) is disordered. The segment covering 876–889 (SSGTPSPTVTVTTS) has biased composition (low complexity).

It belongs to the SecA family. In terms of assembly, monomer and homodimer. Part of the essential Sec protein translocation apparatus which comprises SecA, SecYEG and auxiliary proteins SecDF. Other proteins may also be involved.

The protein localises to the cell inner membrane. Its subcellular location is the cytoplasm. The enzyme catalyses ATP + H2O + cellular proteinSide 1 = ADP + phosphate + cellular proteinSide 2.. Its function is as follows. Part of the Sec protein translocase complex. Interacts with the SecYEG preprotein conducting channel. Has a central role in coupling the hydrolysis of ATP to the transfer of proteins into and across the cell membrane, serving as an ATP-driven molecular motor driving the stepwise translocation of polypeptide chains across the membrane. In Leptospira borgpetersenii serovar Hardjo-bovis (strain L550), this protein is Protein translocase subunit SecA.